The sequence spans 34 residues: Peptide 9797 (34 aa).

Expressed by the venom gland.

The protein localises to the secreted. This chain is Peptide 9797, found in Tityus stigmurus (Brazilian scorpion).